The following is a 136-amino-acid chain: Snaclec rhodocytin subunit alpha (136 aa).

Disulfide bonds link C5–C16, C33–C131, and C106–C123. Residues 12–132 enclose the C-type lectin domain; it reads YDQHCYQAFN…CEQMHAFVCK (121 aa).

The protein belongs to the snaclec family. In terms of assembly, dimer (non-covalently linked) of heterodimers of subunits alpha and beta (disulfide-linked). In terms of tissue distribution, expressed by the venom gland.

The protein localises to the secreted. In terms of biological role, elicits platelet aggregation by the binding to the C-type lectin domain family 1 member B (CLEC1B/CLEC2). Binding leads to tyrosine phosphorylation in the cytoplasmic tail of CLEC1B, which promotes the binding of spleen tyrosine kinase (Syk), subsequent activation of PLC-gamma-2, and platelet activation and aggregation. Binding to GPIbalpha (GP1BA) and alpha-2/beta-1 (ITGA2/ITGB1) may also induce aggregation, but this is controversial. This Calloselasma rhodostoma (Malayan pit viper) protein is Snaclec rhodocytin subunit alpha.